The chain runs to 129 residues: Small ribosomal subunit protein uS11 (129 aa).

This sequence belongs to the universal ribosomal protein uS11 family. In terms of assembly, part of the 30S ribosomal subunit. Interacts with proteins S7 and S18. Binds to IF-3.

Its function is as follows. Located on the platform of the 30S subunit, it bridges several disparate RNA helices of the 16S rRNA. Forms part of the Shine-Dalgarno cleft in the 70S ribosome. The polypeptide is Small ribosomal subunit protein uS11 (Vibrio atlanticus (strain LGP32) (Vibrio splendidus (strain Mel32))).